We begin with the raw amino-acid sequence, 338 residues long: Protein pelota homolog (338 aa).

Belongs to the eukaryotic release factor 1 family. Pelota subfamily. As to quaternary structure, monomer. A divalent metal cation is required as a cofactor.

It localises to the cytoplasm. Its function is as follows. May function in recognizing stalled ribosomes, interact with stem-loop structures in stalled mRNA molecules, and effect endonucleolytic cleavage of the mRNA. May play a role in the release non-functional ribosomes and degradation of damaged mRNAs. Has endoribonuclease activity. This chain is Protein pelota homolog, found in Caldivirga maquilingensis (strain ATCC 700844 / DSM 13496 / JCM 10307 / IC-167).